A 126-amino-acid polypeptide reads, in one-letter code: C-X-C motif chemokine 9 (126 aa).

The signal sequence occupies residues 1–21 (MKSAVLFLLGIIFLEQCGVRG). 2 disulfides stabilise this stretch: Cys-30–Cys-57 and Cys-32–Cys-73. An N-linked (GlcNAc...) asparagine glycan is attached at Asn-58. Residues 91 to 126 (KISQKKKQKRGKKHQKNMKNRKPKTPQSRRRSRKTT) are disordered. Residues 93–126 (SQKKKQKRGKKHQKNMKNRKPKTPQSRRRSRKTT) are compositionally biased toward basic residues.

Belongs to the intercrine alpha (chemokine CxC) family.

It localises to the secreted. In terms of biological role, may be a cytokine that affects the growth, movement, or activation state of cells that participate in immune and inflammatory response. In Mus musculus (Mouse), this protein is C-X-C motif chemokine 9 (Cxcl9).